Here is a 553-residue protein sequence, read N- to C-terminus: Glycerol kinase 2 (553 aa).

Thr-20 provides a ligand contact to substrate. Position 24 (Arg-24) interacts with ATP. Residues Arg-94, Tyr-148, and Asp-259 each coordinate substrate. ATP is bound by residues Thr-281, Gly-326, and 427–431; that span reads GMTNN. The chain crosses the membrane as a helical span at residues 526 to 546; the sequence is IFSSMPLGFFIVSSMVMLIGA.

The protein belongs to the FGGY kinase family. Interacts with ARMC12 and PLD6.

The protein localises to the mitochondrion outer membrane. It is found in the cytoplasm. The enzyme catalyses glycerol + ATP = sn-glycerol 3-phosphate + ADP + H(+). Its pathway is polyol metabolism; glycerol degradation via glycerol kinase pathway; sn-glycerol 3-phosphate from glycerol: step 1/1. Its function is as follows. Key enzyme in the regulation of glycerol uptake and metabolism. Essential for male fertility and sperm mitochondrial sheath formation. Required for proper arrangement of crescent-like mitochondria to form the mitochondrial sheath during spermatogenesis. Can induce mitochondrial clustering through interactions with PLD6 and up-regulation of phosphatidic acid synthesis in the mitochondria. The polypeptide is Glycerol kinase 2 (GK2) (Macaca fascicularis (Crab-eating macaque)).